The following is a 326-amino-acid chain: MILATKVFFTSFVFGFILFPYFIKLLKKISKDGQPIRSCGPESHLITKKNVPPMGGIIILISSLLPILLWAQLTPEILLLILITLFFALLGFIDDYLKLKTNHYRGLSAKTKILIQFIVALVGVFILKLYSAECFTKTSLFKGVIIDFGYLYVPFAAFVIVGSSNAVNLTDGLDGLAATQVITSFAFLGLIAYITQADMNITLFCIAFIGAILSFLWFNTHPAKIFMGDVGSLSVGAALGLTSVLIKREMLFAIIGIIFVIETLSVIIQISYFKYTKFKYGEGKRVFLMAPIHHHFEKKRWSENVIVMKFWIISIICSVFTITFLL.

10 helical membrane-spanning segments follow: residues 2 to 22 (ILATKVFFTSFVFGFILFPYF), 51 to 71 (VPPMGGIIILISSLLPILLWA), 73 to 93 (LTPEILLLILITLFFALLGFI), 113 to 133 (ILIQFIVALVGVFILKLYSAE), 143 to 163 (GVIIDFGYLYVPFAAFVIVGS), 175 to 195 (GLAATQVITSFAFLGLIAYIT), 199 to 219 (MNITLFCIAFIGAILSFLWFN), 225 to 245 (IFMGDVGSLSVGAALGLTSVL), 250 to 270 (MLFAIIGIIFVIETLSVIIQI), and 305 to 325 (VIVMKFWIISIICSVFTITFL).

Belongs to the glycosyltransferase 4 family. MraY subfamily. It depends on Mg(2+) as a cofactor.

Its subcellular location is the cell membrane. It catalyses the reaction UDP-N-acetyl-alpha-D-muramoyl-L-alanyl-gamma-D-glutamyl-meso-2,6-diaminopimeloyl-D-alanyl-D-alanine + di-trans,octa-cis-undecaprenyl phosphate = di-trans,octa-cis-undecaprenyl diphospho-N-acetyl-alpha-D-muramoyl-L-alanyl-D-glutamyl-meso-2,6-diaminopimeloyl-D-alanyl-D-alanine + UMP. Its pathway is cell wall biogenesis; peptidoglycan biosynthesis. In terms of biological role, catalyzes the initial step of the lipid cycle reactions in the biosynthesis of the cell wall peptidoglycan: transfers peptidoglycan precursor phospho-MurNAc-pentapeptide from UDP-MurNAc-pentapeptide onto the lipid carrier undecaprenyl phosphate, yielding undecaprenyl-pyrophosphoryl-MurNAc-pentapeptide, known as lipid I. The chain is Phospho-N-acetylmuramoyl-pentapeptide-transferase from Wolbachia pipientis wMel.